Here is a 241-residue protein sequence, read N- to C-terminus: Ribulose-phosphate 3-epimerase 2 (241 aa).

Ser21 contacts substrate. A divalent metal cation-binding residues include His46, Asp48, and His79. Asp48 serves as the catalytic Proton acceptor. Residues His79, 155–158 (GFGG), 192–194 (DGG), and 214–215 (GS) contribute to the substrate site. Asp192 contacts a divalent metal cation. Asp192 (proton donor) is an active-site residue.

Belongs to the ribulose-phosphate 3-epimerase family. It depends on a divalent metal cation as a cofactor.

The enzyme catalyses D-ribulose 5-phosphate = D-xylulose 5-phosphate. The protein operates within carbohydrate degradation. Catalyzes the reversible epimerization of D-ribulose 5-phosphate to D-xylulose 5-phosphate. In Cupriavidus necator (strain ATCC 17699 / DSM 428 / KCTC 22496 / NCIMB 10442 / H16 / Stanier 337) (Ralstonia eutropha), this protein is Ribulose-phosphate 3-epimerase 2.